A 907-amino-acid chain; its full sequence is Leucine-rich repeat-containing G-protein coupled receptor 5 (907 aa).

Residues 1-21 (MDTSRLGVLLSLPVLLQLATG) form the signal peptide. Residues 22 to 561 (GSSPRSGVLL…EHLLDGWLIR (540 aa)) lie on the Extracellular side of the membrane. Positions 25–66 (PRSGVLLRGCPTHCHCEPDGRMLLRVDCSDLGLSELPSNLSV) constitute an LRRNT domain. 2 disulfides stabilise this stretch: cysteine 34/cysteine 40 and cysteine 38/cysteine 52. Residues asparagine 63 and asparagine 77 are each glycosylated (N-linked (GlcNAc...) asparagine). LRR repeat units follow at residues 67–90 (FTSY…PSLR), 91–112 (FLEE…AFTG), 115–136 (SLKV…ALQN), 139–160 (SLQS…CFSG), 163–184 (SLRH…AFRS), 187–208 (ALQA…AFGN), 211–232 (SLVV…CFDG), 235–256 (SLET…IRTL), 258–279 (NLKE…AFVG), 282–303 (SLIT…AFQH), 306–328 (ELRT…TGTA), 329–350 (NLES…VCNQ), 353–374 (NLQV…SVCQ), 375–396 (KLQK…TFQQ), 399–420 (SLRS…AFST), and 423–446 (SLIK…HGLT). Asparagine 208 is a glycosylation site (N-linked (GlcNAc...) asparagine). Cysteine 348 and cysteine 373 form a disulfide bridge. Cysteine 479 and cysteine 541 form a disulfide bridge. A glycan (N-linked (GlcNAc...) asparagine) is linked at asparagine 500. A helical membrane pass occupies residues 562–582 (IGVWTIAVLALTCNALVTSTV). Residues 583 to 593 (FRSPLYISPIK) are Cytoplasmic-facing. Residues 594-614 (LLIGVIAAVNMLTGVSSAVLA) form a helical membrane-spanning segment. At 615–638 (GVDAFTFGSFARHGAWWENGVGCH) the chain is on the extracellular side. The cysteines at positions 637 and 712 are disulfide-linked. A helical transmembrane segment spans residues 639–659 (VIGFLSIFASESSVFLLTLAA). Topologically, residues 660-682 (LERGFSVKYSAKFETKAPFSSLK) are cytoplasmic. The helical transmembrane segment at 683 to 703 (VIILLCALLALTMAAVPLLGG) threads the bilayer. Residues 704–722 (SKYGASPLCLPLPFGEPST) are Extracellular-facing. A helical transmembrane segment spans residues 723–743 (MGYMVALILLNSLCFLMMTIA). Over 744–767 (YTKLYCNLDKGDLENIWDCSMVKH) the chain is Cytoplasmic. Residues 768–788 (IALLLFTNCILNCPVAFLSFS) form a helical membrane-spanning segment. Residues 789–802 (SLINLTFISPEVIK) are Extracellular-facing. A glycan (N-linked (GlcNAc...) asparagine) is linked at asparagine 792. A helical transmembrane segment spans residues 803-823 (FILLVVVPLPACLNPLLYILF). Residues 824–907 (NPHFKEDLVS…LSSVAFVPCL (84 aa)) lie on the Cytoplasmic side of the membrane.

Belongs to the G-protein coupled receptor 1 family. Identified in a complex composed of RNF43, LGR5 and RSPO1. Also interacts with other R-spondin ligands, including RSPO2, RSPO3 and RSPO4. In terms of tissue distribution, expressed in skeletal muscle, placenta, spinal cord, and various region of brain. Expressed at the base of crypts in colonic and small mucosa stem cells. In premalignant cancer expression is not restricted to the cript base. Overexpressed in cancers of the ovary, colon and liver.

Its subcellular location is the cell membrane. It is found in the golgi apparatus. The protein localises to the trans-Golgi network membrane. Functionally, receptor for R-spondins that potentiates the canonical Wnt signaling pathway and acts as a stem cell marker of the intestinal epithelium and the hair follicle. Upon binding to R-spondins (RSPO1, RSPO2, RSPO3 or RSPO4), associates with phosphorylated LRP6 and frizzled receptors that are activated by extracellular Wnt receptors, triggering the canonical Wnt signaling pathway to increase expression of target genes. In contrast to classical G-protein coupled receptors, does not activate heterotrimeric G-proteins to transduce the signal. Involved in the development and/or maintenance of the adult intestinal stem cells during postembryonic development. The sequence is that of Leucine-rich repeat-containing G-protein coupled receptor 5 (LGR5) from Homo sapiens (Human).